The chain runs to 3021 residues: Genome polyprotein (3021 aa).

Ser2 carries the post-translational modification N-acetylserine; by host. Residues Ser2–Lys23 are interaction with STAT1. Residues Ser2–Pro58 form an interaction with EIF2AK2/PKR region. The tract at residues Ser2–Arg59 is interaction with DDX3X. A disordered region spans residues Ser2–Ser75. Residues Ser2–Asn168 are Cytoplasmic-facing. 2 consecutive short sequence motifs (nuclear localization signal) follow at residues Pro5 to Arg13 and Pro38 to Arg43. The span at Pro7 to Ile16 shows a compositional bias: basic residues. Residue Ser53 is modified to Phosphoserine; by host. 2 consecutive short sequence motifs (nuclear localization signal) follow at residues Pro58–Pro64 and Pro66–Ser71. Over residues Pro58 to Ala68 the composition is skewed to basic residues. Position 99 is a phosphoserine; by host (Ser99). The interval Pro112–Ala152 is important for endoplasmic reticulum and mitochondrial localization. Ser116 carries the phosphoserine; by host PKA modification. The interval Val122 to Ser173 is interaction with APOA2. An important for lipid droplets localization region spans residues Phe164–Gly167. A helical membrane pass occupies residues Leu169–Ala189. Positions Leu178–Ser191 are cleaved as a propeptide — ER anchor for the core protein, removed in mature form by host signal peptidase. At Ala190–Gly358 the chain is on the lumenal side. Asn196, Asn209, and Asn234 each carry an N-linked (GlcNAc...) asparagine; by host glycan. Positions Leu265–Arg296 are important for fusion. Asn305 carries N-linked (GlcNAc...) asparagine; by host glycosylation. A helical transmembrane segment spans residues Leu359–Ser379. Over Gly380–Leu731 the chain is Lumenal. The HVR1 stretch occupies residues Thr385–Gln412. Residues Asn417, Asn423, and Asn430 are each glycosylated (N-linked (GlcNAc...) (high mannose) asparagine; by host). Disulfide bonds link Cys429/Cys553, Cys452/Cys459, Cys487/Cys495, and Cys504/Cys509. Asn448 is a glycosylation site (N-linked (GlcNAc...) asparagine; by host). An HVR2 region spans residues Asp474 to Gly479. Asn476 is a glycosylation site (N-linked (GlcNAc...) asparagine; by host). Positions Ser481 to Pro494 are CD81-binding 1. N-linked (GlcNAc...) asparagine; by host glycosylation is present at Asn533. A CD81-binding 2 region spans residues Pro545 to Gly552. N-linked (GlcNAc...) asparagine; by host glycosylation occurs at Asn557. Residues Cys565 and Cys570 are joined by a disulfide bond. Residue Asn578 is glycosylated (N-linked (GlcNAc...) asparagine; by host). 3 disulfide bridges follow: Cys587/Cys591, Cys603/Cys626, and Cys613/Cys650. N-linked (GlcNAc...) (high mannose) asparagine; by host glycosylation occurs at Asn651. Cys658 and Cys683 are oxidised to a cystine. The segment at Ser666 to Glu677 is PKR/eIF2-alpha phosphorylation homology domain (PePHD). Residues Leu732–Ala752 form a helical membrane-spanning segment. Residues Ala753–Val763 lie on the Lumenal side of the membrane. The chain crosses the membrane as a helical span at residues Ala764 to Val784. Topologically, residues Arg785–Lys787 are cytoplasmic. Residues Leu788–Leu809 traverse the membrane as a helical segment. Residues Pro810–Glu819 lie on the Lumenal side of the membrane. A helical membrane pass occupies residues Asp820–Trp840. At Tyr841 to Trp844 the chain is on the cytoplasmic side. Residues Ile845–His864 traverse the membrane as a helical segment. The Lumenal segment spans residues Val865 to Tyr887. Residues Pro888–Ile908 form a helical membrane-spanning segment. Positions Leu905–Leu1032 constitute a Peptidase C18 domain. Residues Gln909–Thr1663 lie on the Cytoplasmic side of the membrane. Residues Ala910–Arg1212 are protease NS2-3. Cys928 carries the S-palmitoyl cysteine; by host lipid modification. Residues Ile935–Leu955 form an interaction with host SCPS1 region. Active-site for protease NS2 activity; shared with dimeric partner residues include His958, Glu978, and Cys999. The Peptidase S29 domain occupies Ala1033 to Pro1214. Active-site charge relay system; for serine protease NS3 activity residues include His1089 and Asp1113. Residues Cys1129 and Cys1131 each coordinate Zn(2+). Ser1171 acts as the Charge relay system; for serine protease NS3 activity in catalysis. Cys1177 and His1181 together coordinate Zn(2+). The 153-residue stretch at Pro1223–Ser1375 folds into the Helicase ATP-binding domain. Ala1236–Ser1243 contributes to the ATP binding site. Positions 1243 and 1323 each coordinate Mg(2+). Positions Asp1322–His1325 match the DECH box motif. Residues Tyr1382–Arg1544 form the Helicase C-terminal domain. The segment at Gln1492–Thr1504 is RNA-binding. The helical transmembrane segment at Ser1664 to Gly1684 threads the bilayer. The interval Cys1685 to Gly1696 is NS3-binding. The Cytoplasmic portion of the chain corresponds to Cys1685–Gln1811. The chain crosses the membrane as a helical span at residues Thr1812–Gln1830. Over Ser1831 to Ala1834 the chain is Lumenal. Residues Phe1835–Leu1855 form a helical membrane-spanning segment. Residue Asp1856 is a topological domain, cytoplasmic. The helical transmembrane segment at Ile1857–Gly1877 threads the bilayer. Residues Glu1878–Asn1887 are Lumenal-facing. Residues Leu1888 to Leu1908 form a helical membrane-spanning segment. The Cytoplasmic segment spans residues Arg1909–Cys1978. A lipid anchor (S-palmitoyl cysteine; by host) is attached at Cys1978. Residues Ser1979 to Ala2008 lie within the membrane without spanning it. Topologically, residues Leu2009–Arg3000 are cytoplasmic. The Zn(2+) site is built by Cys2017, Cys2035, Cys2037, and Cys2058. An FKBP8-binding region spans residues Glu2126–Ala2214. Residues Glu2126–Thr2338 form a transcriptional activation region. The segment at Pro2141–Pro2145 is interaction with non-structural protein 4A. The disordered stretch occupies residues Ala2193 to Pro2215. The interaction with host SKP2 stretch occupies residues Arg2195–Glu2448. 6 positions are modified to phosphoserine; by host: Ser2200, Ser2203, Ser2207, Ser2210, Ser2213, and Ser2216. The segment covering Ser2200–Pro2215 has biased composition (low complexity). Residues Ser2216 to Lys2255 form an ISDR region. Positions Ser2216–Phe2281 are interaction with EIF2AK2/PKR. Residues Lys2255 to Tyr2312 form an NS4B-binding region. The interval Asp2305–Pro2387 is V3. The SH3-binding motif lies at Pro2328–Pro2331. A Nuclear localization signal motif is present at residues Pro2333–Leu2341. Lys2356 participates in a covalent cross-link: Glycyl lysine isopeptide (Lys-Gly) (interchain with G-Cter in ubiquitin). The tract at residues Lys2356 to Ser2417 is disordered. Low complexity-rich tracts occupy residues Pro2359 to Ser2381 and Gly2388 to Pro2401. Ser2459 and Ser2472 each carry phosphoserine; by host. Residues Pro2644 to Asp2762 enclose the RdRp catalytic domain. 3 residues coordinate Mg(2+): Asp2650, Asp2748, and Asp2749. A helical transmembrane segment spans residues His3001–Arg3021.

This sequence belongs to the hepacivirus polyprotein family. In terms of assembly, homooligomer. Interacts with E1 (via C-terminus). Interacts with the non-structural protein 5A. Interacts (via N-terminus) with host STAT1 (via SH2 domain); this interaction results in decreased STAT1 phosphorylation and ubiquitin-mediated proteasome-dependent STAT1 degradation, leading to decreased IFN-stimulated gene transcription. Interacts with host STAT3; this interaction constitutively activates STAT3. Interacts with host LTBR receptor. Interacts with host TNFRSF1A receptor and possibly induces apoptosis. Interacts with host HNRPK. Interacts with host YWHAE. Interacts with host UBE3A/E6AP. Interacts with host DDX3X. Interacts with host APOA2. Interacts with host RXRA protein. Interacts with host SP110 isoform 3/Sp110b; this interaction sequesters the transcriptional corepressor SP110 away from the nucleus. Interacts with host CREB3 nuclear transcription protein; this interaction triggers cell transformation. Interacts with host ACY3. Interacts with host C1QR1. Interacts with host RBM24; this interaction, which enhances the interaction of the mature core protein with 5'-UTR, may inhibit viral translation and favor replication. Interacts with host EIF2AK2/PKR; this interaction induces the autophosphorylation of EIF2AK2. Part of the viral assembly initiation complex composed of NS2, E1, E2, NS3, NS4A, NS5A and the mature core protein. As to quaternary structure, forms a heterodimer with envelope glycoprotein E2. Interacts with mature core protein. Interacts with protease NS2. The heterodimer E1/E2 interacts with host CLDN1; this interaction plays a role in viral entry into host cell. Interacts with host SPSB2 (via C-terminus). Part of the viral assembly initiation complex composed of NS2, E1, E2, NS3, NS4A, NS5A and the mature core protein. Interacts with host NEURL3; this interaction prevents E1 binding to glycoprotein E2. Forms a heterodimer with envelope glycoprotein E1. Interacts with host CD81 and SCARB1 receptors; these interactions play a role in viral entry into host cell. Interacts with host EIF2AK2/PKR; this interaction inhibits EIF2AK2 and probably allows the virus to evade the innate immune response. Interacts with host CD209/DC-SIGN and CLEC4M/DC-SIGNR. Interact with host SPCS1; this interaction is essential for viral particle assembly. Interacts with protease NS2. The heterodimer E1/E2 interacts with host CLDN1; this interaction plays a role in viral entry into host cell. Part of the viral assembly initiation complex composed of NS2, E1, E2, NS3, NS4A, NS5A and the mature core protein. Interacts with host SLC3A2/4F2hc; the interaction may facilitate viral entry into host cell. Interacts with human PLSCR1. In terms of assembly, homohexamer. Homoheptamer. Interacts with protease NS2. As to quaternary structure, homodimer. Interacts with host SPCS1; this interaction is essential for viral particle assembly. Interacts with envelope glycoprotein E1. Interacts with envelope glycoprotein E2. Interacts with viroporin p7. Interacts with serine protease/helicase NS3. Part of the replication complex composed of NS2, NS3, NS4A, NS4B, NS5A and the RNA-directed RNA polymerase embedded in an ER-derived membranous web. Part of the viral assembly initiation complex composed of NS2, E1, E2, NS3, NS4A, NS5A and the mature core protein. Interacts with protease NS2. Interacts with non-structural protein 4A; this interaction stabilizes the folding of NS3 serine protease. NS3-NS4A interaction is essential for NS3 activation and allows membrane anchorage of the latter. NS3/NS4A complex also prevents phosphorylation of host IRF3, thus preventing the establishment of dsRNA induced antiviral state. Interacts with host MAVS; this interaction leads to the cleavage and inhibition of host MAVS. Interacts with host TICAM1; this interaction leads to the cleavage and inhibition of host TICAM1. Interacts with host TANK-binding kinase/TBK1; this interaction results in the inhibition of the association between TBK1 and IRF3, which leads to the inhibition of IRF3 activation. Interacts with host RBM24. Part of the replication complex composed of NS2, NS3, NS4A, NS4B, NS5A and the RNA-directed RNA polymerase embedded in an ER-derived membranous web. Part of the viral assembly initiation complex composed of NS2, E1, E2, NS3, NS4A, NS5A and the mature core protein. In terms of assembly, interacts with NS3 serine protease; this interaction stabilizes the folding of NS3 serine protease. NS3-NS4A interaction is essential for NS3 activation and allows membrane anchorage of the latter. Interacts with non-structural protein 5A (via N-terminus). Part of the replication complex composed of NS2, NS3, NS4A, NS4B, NS5A and the RNA-directed RNA polymerase embedded in an ER-derived membranous web. Part of the viral assembly initiation complex composed of NS2, E1, E2, NS3, NS4A, NS5A and the mature core protein. As to quaternary structure, homomultimer. Interacts with non-structural protein NS5A. Interacts with host PLA2G4C; this interaction likely initiates the recruitment of replication complexes to lipid droplets. Interacts with host STING; this interaction disrupts the interaction between STING and TBK1 thereby suppressing the interferon signaling. Part of the replication complex composed of NS2, NS3, NS4A, NS4B, NS5A and the RNA-directed RNA polymerase embedded in an ER-derived membranous web. Monomer. Homodimer; dimerization is required for RNA-binding. Interacts with the mature core protein. Interacts (via N-terminus) with non-structural protein 4A. Interacts with non-structural protein 4B. Interacts (via region D2) with RNA-directed RNA polymerase. Part of the viral assembly initiation complex composed of NS2, E1, E2, NS3, NS4A, NS5A and the mature core protein. Part of the replication complex composed of NS2, NS3, NS4A, NS4B, NS5A and the RNA-directed RNA polymerase embedded in an ER-derived membranous web. Interacts with host GRB2. Interacts with host BIN1. Interacts with host PIK3R1. Interacts with host SRCAP. Interacts with host FKBP8. Interacts (via C-terminus) with host VAPB (via MSP domain). Interacts with host EIF2AK2/PKR; this interaction leads to disruption of EIF2AK2 dimerization by NS5A and probably allows the virus to evade the innate immune response. Interacts (via N-terminus) with host PACSIN2 (via N-terminus); this interaction attenuates protein kinase C alpha-mediated phosphorylation of PACSIN2 by disrupting the interaction between PACSIN2 and PRKCA. Interacts (via N-terminus) with host SRC kinase (via SH2 domain). Interacts with most Src-family kinases. Interacts with host IFI27 and SKP2; promotes the ubiquitin-mediated proteasomal degradation of NS5A. Interacts with host GPS2. Interacts with host TNFRSF21; this interaction allows the modulation by the virus of JNK, p38 MAPK, STAT3, and Akt signaling pathways in a DR6-dependent manner. Interacts (via N-terminus) with host CIDEB (via N-terminus); this interaction seems to regulate the association of HCV particles with APOE. Interacts with host CHKA/Choline Kinase-alpha; CHKA bridges host PI4KA and NS5A and potentiates NS5A-stimulated PI4KA activity, which then facilitates the targeting of the ternary complex to the ER for viral replication. Interacts with host SPSB2 (via C-terminus); this interaction targets NS5A for ubiquitination and degradation. Interacts with host RAB18; this interaction may promote the association of NS5A and other replicase components with lipid droplets. Interacts (via region D2) with host PPIA/CYPA; the interaction stimulates RNA-binding ability of NS5A and is dependent on the peptidyl-prolyl cis-trans isomerase activity of PPIA/CYPA. Interacts with host TRIM14; this interaction induces the degradation of NS5A. In terms of assembly, homooligomer. Interacts with non-structural protein 5A. Interacts with host VAPB. Interacts with host PRK2/PKN2. Interacts with host HNRNPA1 and SEPT6; these interactions facilitate viral replication. Part of the replication complex composed of NS2, NS3, NS4A, NS4B, NS5A and the RNA-directed RNA polymerase. Zn(2+) serves as cofactor. Requires Mg(2+) as cofactor. Post-translationally, specific enzymatic cleavages in vivo yield mature proteins. The structural proteins, core, E1, E2 and p7 are produced by proteolytic processing by host signal peptidases. The core protein precursor is synthesized as a 23 kDa, which is retained in the ER membrane through the hydrophobic signal peptide. Cleavage by the signal peptidase releases the 21 kDa mature core protein. The cleavage of the core protein precursor occurs between aminoacids 176 and 188 but the exact cleavage site is not known. Some degraded forms of the core protein appear as well during the course of infection. The other proteins (p7, NS2, NS3, NS4A, NS4B, NS5A and NS5B) are cleaved by the viral proteases. Autoprocessing between NS2 and NS3 is mediated by the NS2 cysteine protease catalytic domain and regulated by the NS3 N-terminal domain. Phosphorylated by host PKC and PKA. In terms of processing, ubiquitinated; mediated by UBE3A and leading to core protein subsequent proteasomal degradation. Post-translationally, highly N-glycosylated. Palmitoylation is required for NS2/3 autoprocessing and E2 recruitment to membranes. In terms of processing, palmitoylated. This modification may play a role in its polymerization or in protein-protein interactions. Post-translationally, phosphorylated on serines in a basal form termed p56. p58 is a hyperphosphorylated form of p56. p56 and p58 coexist in the cell in roughly equivalent amounts. Hyperphosphorylation is dependent on the presence of NS4A. Host CSNK1A1/CKI-alpha or RPS6KB1 kinases may be responsible for NS5A phosphorylation. Tyrosine phosphorylation is essential for the interaction with host SRC. In terms of processing, ubiquitinated. Ubiquitination, most probably at Lys-2350, mediated by host IFI27 and SKP2 leads to proteasomal degradation, restricting viral infection. Ubiquitination by host TRIM22 leads to interruption of viral replication. Post-translationally, the N-terminus is phosphorylated by host PRK2/PKN2.

The protein localises to the host endoplasmic reticulum membrane. Its subcellular location is the host mitochondrion membrane. It is found in the virion. The protein resides in the host cytoplasm. It localises to the host nucleus. The protein localises to the host lipid droplet. Its subcellular location is the virion membrane. It is found in the host mitochondrion. The protein resides in the host cell membrane. It localises to the host perinuclear region. The catalysed reaction is Hydrolysis of four peptide bonds in the viral precursor polyprotein, commonly with Asp or Glu in the P6 position, Cys or Thr in P1 and Ser or Ala in P1'.. The enzyme catalyses a ribonucleoside 5'-triphosphate + H2O = a ribonucleoside 5'-diphosphate + phosphate + H(+). It carries out the reaction ATP + H2O = ADP + phosphate + H(+). It catalyses the reaction RNA(n) + a ribonucleoside 5'-triphosphate = RNA(n+1) + diphosphate. With respect to regulation, inhibited by the antiviral drug hexamethylene amiloride. Inhibition by amantadine appears to be genotype-dependent. Also inhibited by long-alkyl-chain iminosugar derivatives. Its activity is regulated as follows. Activity is up-regulated by PRK2/PKN2-mediated phosphorylation. In terms of biological role, packages viral RNA to form a viral nucleocapsid, and promotes virion budding. Participates in the viral particle production as a result of its interaction with the non-structural protein 5A. Binds RNA and may function as a RNA chaperone to induce the RNA structural rearrangements taking place during virus replication. Modulates viral translation initiation by interacting with viral IRES and 40S ribosomal subunit. Affects various cell signaling pathways, host immunity and lipid metabolism. Prevents the establishment of cellular antiviral state by blocking the interferon-alpha/beta (IFN-alpha/beta) and IFN-gamma signaling pathways and by blocking the formation of phosphorylated STAT1 and promoting ubiquitin-mediated proteasome-dependent degradation of STAT1. Activates STAT3 leading to cellular transformation. Regulates the activity of cellular genes, including c-myc and c-fos. May repress the promoter of p53, and sequester CREB3 and SP110 isoform 3/Sp110b in the cytoplasm. Represses cell cycle negative regulating factor CDKN1A, thereby interrupting an important check point of normal cell cycle regulation. Targets transcription factors involved in the regulation of inflammatory responses and in the immune response: suppresses TNF-induced NF-kappa-B activation, and activates AP-1. Binds to dendritic cells (DCs) via C1QR1, resulting in down-regulation of T-lymphocytes proliferation. Alters lipid metabolism by interacting with hepatocellular proteins involved in lipid accumulation and storage. Induces up-regulation of FAS promoter activity, and thereby contributes to the increased triglyceride accumulation in hepatocytes (steatosis). Functionally, forms a heterodimer with envelope glycoprotein E2, which mediates virus attachment to the host cell, virion internalization through clathrin-dependent endocytosis and fusion with host membrane. Fusion with the host cell is most likely mediated by both E1 and E2, through conformational rearrangements of the heterodimer required for fusion rather than a classical class II fusion mechanism. E1/E2 heterodimer binds host apolipoproteins such as APOB and ApoE thereby forming a lipo-viro-particle (LVP). APOE associated to the LVP allows the initial virus attachment to cell surface receptors such as the heparan sulfate proteoglycans (HSPGs), syndecan-1 (SDC1), syndecan-1 (SDC2), the low-density lipoprotein receptor (LDLR) and scavenger receptor class B type I (SCARB1). The cholesterol transfer activity of SCARB1 allows E2 exposure and binding of E2 to SCARB1 and the tetraspanin CD81. E1/E2 heterodimer binding on CD81 activates the epithelial growth factor receptor (EGFR) signaling pathway. Diffusion of the complex E1-E2-EGFR-SCARB1-CD81 to the cell lateral membrane allows further interaction with Claudin 1 (CLDN1) and occludin (OCLN) to finally trigger HCV entry. Its function is as follows. Forms a heterodimer with envelope glycoprotein E1, which mediates virus attachment to the host cell, virion internalization through clathrin-dependent endocytosis and fusion with host membrane. Fusion with the host cell is most likely mediated by both E1 and E2, through conformational rearrangements of the heterodimer required for fusion rather than a classical class II fusion mechanism. The interaction between envelope glycoprotein E2 and host apolipoprotein E/APOE allows the proper assembly, maturation and infectivity of the viral particles. This interaction is probably promoted via the up-regulation of cellular autophagy by the virus. E1/E2 heterodimer binds host apolipoproteins such as APOB and APOE thereby forming a lipo-viro-particle (LVP). APOE associated to the LVP allows the initial virus attachment to cell surface receptors such as the heparan sulfate proteoglycans (HSPGs), syndecan-1 (SDC1), syndecan-1 (SDC2), the low-density lipoprotein receptor (LDLR) and scavenger receptor class B type I (SCARB1). The cholesterol transfer activity of SCARB1 allows E2 exposure and binding of E2 to SCARB1 and the tetraspanin CD81. E1/E2 heterodimer binding on CD81 activates the epithelial growth factor receptor (EGFR) signaling pathway. Diffusion of the complex E1-E2-EGFR-SCARB1-CD81 to the cell lateral membrane allows further interaction with Claudin 1 (CLDN1) and occludin (OCLN) to finally trigger HCV entry. Inhibits host EIF2AK2/PKR activation, preventing the establishment of an antiviral state. Viral ligand for CD209/DC-SIGN and CLEC4M/DC-SIGNR, which are respectively found on dendritic cells (DCs), and on liver sinusoidal endothelial cells and macrophage-like cells of lymph node sinuses. These interactions allow the capture of circulating HCV particles by these cells and subsequent facilitated transmission to permissive cells such as hepatocytes and lymphocyte subpopulations. The interaction between E2 and host amino acid transporter complex formed by SLC3A2 and SLC7A5/LAT1 may facilitate viral entry into host cell. Ion channel protein that acts as a viroporin and plays an essential role in the assembly, envelopment and secretion of viral particles. Regulates the host cell secretory pathway, which induces the intracellular retention of viral glycoproteins and favors assembly of viral particles. Creates a pore in acidic organelles and releases Ca(2+) and H(+) in the cytoplasm of infected cells, leading to a productive viral infection. High levels of cytoplasmic Ca(2+) may trigger membrane trafficking and transport of viral ER-associated proteins to viroplasms, sites of viral genome replication. This ionic imbalance induces the assembly of the inflammasome complex, which triggers the maturation of pro-IL-1beta into IL-1beta through the action of caspase-1. Targets also host mitochondria and induces mitochondrial depolarization. In addition of its role as a viroporin, acts as a lipid raft adhesion factor. In terms of biological role, cysteine protease required for the proteolytic auto-cleavage between the non-structural proteins NS2 and NS3. The N-terminus of NS3 is required for the function of NS2 protease (active region NS2-3). Promotes the initiation of viral particle assembly by mediating the interaction between structural and non-structural proteins. Functionally, displays three enzymatic activities: serine protease with a chymotrypsin-like fold, NTPase and RNA helicase. NS3 serine protease, in association with NS4A, is responsible for the cleavages of NS3-NS4A, NS4A-NS4B, NS4B-NS5A and NS5A-NS5B. The NS3/NS4A complex prevents phosphorylation of host IRF3, thus preventing the establishment of dsRNA induced antiviral state. The NS3/NS4A complex induces host amino acid transporter component SLC3A2, thus contributing to HCV propagation. NS3 RNA helicase binds to RNA and unwinds both dsDNA and dsRNA in the 3' to 5' direction, and likely resolves RNA complicated stable secondary structures in the template strand. Binds a single ATP and catalyzes the unzipping of a single base pair of dsRNA. Inhibits host antiviral proteins TBK1 and IRF3 thereby preventing the establishment of an antiviral state. Cleaves host MAVS/CARDIF thereby preventing the establishment of an antiviral state. Cleaves host TICAM1/TRIF, thereby disrupting TLR3 signaling and preventing the establishment of an antiviral state. Its function is as follows. Peptide cofactor which forms a non-covalent complex with the N-terminal of NS3 serine protease. The NS3/NS4A complex prevents phosphorylation of host IRF3, thus preventing the establishment of dsRNA induced antiviral state. The NS3/NS4A complex induces host amino acid transporter component SLC3A2, thus contributing to HCV propagation. Induces a specific membrane alteration that serves as a scaffold for the virus replication complex. This membrane alteration gives rise to the so-called ER-derived membranous web that contains the replication complex. NS4B self-interaction contributes to its function in membranous web formation. Promotes host TRIF protein degradation in a CASP8-dependent manner thereby inhibiting host TLR3-mediated interferon signaling. Disrupts the interaction between STING and TBK1 contributing to the inhibition of interferon signaling. In terms of biological role, phosphorylated protein that is indispensable for viral replication and assembly. Both hypo- and hyperphosphorylated states are required for the viral life cycle. The hyperphosphorylated form of NS5A is an inhibitor of viral replication. Involved in RNA-binding and especially in binding to the viral genome. Zinc is essential for RNA-binding. Participates in the viral particle production as a result of its interaction with the mature viral core protein. Its interaction with host VAPB may target the viral replication complex to vesicles. Down-regulates viral IRES translation initiation. Mediates interferon resistance, presumably by interacting with and inhibiting host EIF2AK2/PKR. Prevents BIN1-induced apoptosis. Acts as a transcriptional activator of some host genes important for viral replication when localized in the nucleus. Via the interaction with host PACSIN2, modulates lipid droplet formation in order to promote virion assembly. Modulates TNFRSF21/DR6 signaling pathway for viral propagation. Functionally, RNA-dependent RNA polymerase that performs primer-template recognition and RNA synthesis during viral replication. Initiates RNA transcription/replication at a flavin adenine dinucleotide (FAD), resulting in a 5'- FAD cap on viral RNAs. In this way, recognition of viral 5' RNA by host pattern recognition receptors can be bypassed, thereby evading activation of antiviral pathways. The protein is Genome polyprotein of Homo sapiens (Human).